We begin with the raw amino-acid sequence, 187 residues long: ATP synthase subunit b 2 (187 aa).

The span at 1 to 12 (MAQERAEHESAD) shows a compositional bias: basic and acidic residues. A disordered region spans residues 1–31 (MAQERAEHESADQHTTSTGVPHEGQGEPFPP). Residues 40 to 60 (LLIWLAISFLLLYALMSKLVL) traverse the membrane as a helical segment.

The protein belongs to the ATPase B chain family. As to quaternary structure, F-type ATPases have 2 components, F(1) - the catalytic core - and F(0) - the membrane proton channel. F(1) has five subunits: alpha(3), beta(3), gamma(1), delta(1), epsilon(1). F(0) has three main subunits: a(1), b(2) and c(10-14). The alpha and beta chains form an alternating ring which encloses part of the gamma chain. F(1) is attached to F(0) by a central stalk formed by the gamma and epsilon chains, while a peripheral stalk is formed by the delta and b chains.

Its subcellular location is the cell inner membrane. Functionally, f(1)F(0) ATP synthase produces ATP from ADP in the presence of a proton or sodium gradient. F-type ATPases consist of two structural domains, F(1) containing the extramembraneous catalytic core and F(0) containing the membrane proton channel, linked together by a central stalk and a peripheral stalk. During catalysis, ATP synthesis in the catalytic domain of F(1) is coupled via a rotary mechanism of the central stalk subunits to proton translocation. Component of the F(0) channel, it forms part of the peripheral stalk, linking F(1) to F(0). The b'-subunit is a diverged and duplicated form of b found in plants and photosynthetic bacteria. The chain is ATP synthase subunit b 2 (atpF2) from Beijerinckia indica subsp. indica (strain ATCC 9039 / DSM 1715 / NCIMB 8712).